A 159-amino-acid polypeptide reads, in one-letter code: NADH-quinone oxidoreductase subunit B 2 (159 aa).

4 residues coordinate [4Fe-4S] cluster: cysteine 37, cysteine 38, cysteine 102, and cysteine 132.

Belongs to the complex I 20 kDa subunit family. In terms of assembly, NDH-1 is composed of 14 different subunits. Subunits NuoB, C, D, E, F, and G constitute the peripheral sector of the complex. The cofactor is [4Fe-4S] cluster.

It localises to the cell inner membrane. It catalyses the reaction a quinone + NADH + 5 H(+)(in) = a quinol + NAD(+) + 4 H(+)(out). In terms of biological role, NDH-1 shuttles electrons from NADH, via FMN and iron-sulfur (Fe-S) centers, to quinones in the respiratory chain. Couples the redox reaction to proton translocation (for every two electrons transferred, four hydrogen ions are translocated across the cytoplasmic membrane), and thus conserves the redox energy in a proton gradient. This is NADH-quinone oxidoreductase subunit B 2 from Azoarcus sp. (strain BH72).